Reading from the N-terminus, the 1361-residue chain is Zinc finger protein GLI4 (1361 aa).

The disordered stretch occupies residues 185-270 (SSFGHTPLLH…PQPPDHLTDL (86 aa)). Polar residues-rich tracts occupy residues 198-208 (TFASRQQGALT) and 227-241 (NKVSSESAVSSTVNQ). C2H2-type zinc fingers lie at residues 289–314 (TNCHWDGCSKEFDTQDQLVHHINNDH), 322–349 (FVCRWQDCSREQKPFKAQYMLVVHMRRH), 355–379 (HKCTFEGCFKAYSRLENLKTHLRSH), 385–410 (YVCDHEGCNKAFSNASDRAKHQNRTH), and 416–441 (YICKVPGCTKRYTDPSSLRKHVKTVH). 6 disordered regions span residues 434 to 527 (RKHV…TNNI), 556 to 584 (STVSSWQRSGRPATPETQRIHSAETGTAE), 647 to 720 (NERR…LPNL), 787 to 832 (NAGL…SMNS), 906 to 946 (QNRE…APGA), and 1134 to 1230 (DGLH…PKDN). Residues 475–502 (SGREHSDSVSRDQEHCLQTRTIKTEDNM) show a composition bias toward basic and acidic residues. Positions 506 to 522 (SSPGGQSSCSSEPSPYG) are enriched in low complexity. The span at 573–584 (QRIHSAETGTAE) shows a compositional bias: basic and acidic residues. Residues 653-670 (TSSTLSSAYTSRRSSGIS) are compositionally biased toward low complexity. Composition is skewed to polar residues over residues 672–695 (YFSSRRSSETSQFGGRLNNSSSAD) and 710–720 (EASQHSGLPNL). A compositionally biased stretch (basic and acidic residues) spans 805 to 821 (RASDPVRRTAGIDDKPL). Composition is skewed to polar residues over residues 913–939 (QNLQTEYSSPARNLQSNTKSFHNNTPE) and 1142–1164 (YTVQPQKNGLEPQQNTLGMSGQA). The segment covering 1172-1183 (PRPPAAPHPPNR) has biased composition (pro residues).

Belongs to the GLI C2H2-type zinc-finger protein family.

The protein localises to the nucleus. Functionally, has an essential role in the early embryonic patterning of mesoderm and neuroectoderm. The sequence is that of Zinc finger protein GLI4 (gli4) from Xenopus laevis (African clawed frog).